The chain runs to 591 residues: L-fucose isomerase (591 aa).

Active-site proton acceptor residues include Glu337 and Asp361. Residues Glu337, Asp361, and His528 each coordinate Mn(2+).

It belongs to the L-fucose isomerase family. As to quaternary structure, homohexamer. The cofactor is Mn(2+).

Its subcellular location is the cytoplasm. It catalyses the reaction L-fucose = L-fuculose. The protein operates within carbohydrate degradation; L-fucose degradation; L-lactaldehyde and glycerone phosphate from L-fucose: step 1/3. In terms of biological role, converts the aldose L-fucose into the corresponding ketose L-fuculose. The protein is L-fucose isomerase of Escherichia coli O139:H28 (strain E24377A / ETEC).